Reading from the N-terminus, the 92-residue chain is RQC P-site tRNA stabilizing factor (92 aa).

The S4 RNA-binding domain occupies 5–65 (MRLDKYLKVS…GPKIVTAKIE (61 aa)).

The protein belongs to the RqcP family. As to quaternary structure, associates with stalled 50S ribosomal subunits. Binds to RqcH, 23S rRNA and the P-site tRNA. Does not require RqcH for association with 50S subunits.

In terms of biological role, key component of the ribosome quality control system (RQC), a ribosome-associated complex that mediates the extraction of incompletely synthesized nascent chains from stalled ribosomes and their subsequent degradation. RqcH recruits Ala-charged tRNA, and with RqcP directs the elongation of stalled nascent chains on 50S ribosomal subunits, leading to non-templated C-terminal alanine extensions (Ala tail). The Ala tail promotes nascent chain degradation. RqcP is associated with the translocation-like movement of the peptidyl-tRNA from the A-site into the P-site. The protein is RQC P-site tRNA stabilizing factor of Listeria monocytogenes serovar 1/2a (strain ATCC BAA-679 / EGD-e).